The chain runs to 39 residues: Photosystem II reaction center protein Y (39 aa).

Residues 5-23 (VLVVVGPLLIAASWAVFNI) traverse the membrane as a helical segment.

This sequence belongs to the PsbY family. PSII is composed of 1 copy each of membrane proteins PsbA, PsbB, PsbC, PsbD, PsbE, PsbF, PsbH, PsbI, PsbJ, PsbK, PsbL, PsbM, PsbT, PsbX, PsbY, PsbZ, Psb30/Ycf12, peripheral proteins PsbO, CyanoQ (PsbQ), PsbU, PsbV and a large number of cofactors. It forms dimeric complexes.

Its subcellular location is the cellular thylakoid membrane. In terms of biological role, loosely associated component of the core of photosystem II (PSII), it is not always seen in crystals. PSII is a light-driven water plastoquinone oxidoreductase, using light energy to abstract electrons from H(2)O, generating a proton gradient subsequently used for ATP formation. The sequence is that of Photosystem II reaction center protein Y from Rippkaea orientalis (strain PCC 8801 / RF-1) (Cyanothece sp. (strain PCC 8801)).